An 892-amino-acid polypeptide reads, in one-letter code: NACHT, LRR and PYD domains-containing protein 6 (892 aa).

Positions 1–103 (MDQPEAPCSS…AAQLQERRLQ (103 aa)) constitute a Pyrin domain. Residues 158-181 (APEEAMGPAEEPEPGRARRSDTHT) are disordered. A compositionally biased stretch (basic and acidic residues) spans 170–181 (EPGRARRSDTHT). Positions 196–513 (LTVVLQGPAG…EFLAALSYLL (318 aa)) constitute an NACHT domain. An ATP-binding site is contributed by 202-209 (GPAGIGKT). Residues 352 to 356 (KDKKK) are disordered. An LRR 1 repeat occupies 462 to 487 (EKELEQLELRGSKVQTLFLSKKELPG). A disordered region spans residues 590 to 614 (APEVTEGAKGLEDTEEPEEEEEGEE). A compositionally biased stretch (acidic residues) spans 602–614 (DTEEPEEEEEGEE). LRR repeat units follow at residues 727 to 747 (LCHL…VCRD), 755 to 778 (APAL…MLSE), 811 to 834 (SPAL…YLCA), and 845 to 868 (TLSL…KRAK).

The protein belongs to the NLRP family. Homomultimer; forms the NLRP6 inflammasome polymeric complex, a filament composed of homopolymers in response to pathogens and other damage-associated signals. The core of NLRP6 inflammasomes consists of a signal sensor component (NLRP6), an adapter (PYCARD/ASC), which recruits effector pro-inflammatory caspases (CASP1 and CASP4). Interacts (via pyrin domain) with PYCARD/ASC (via pyrin domain); interaction takes place following NLRP6 activation and formation of liquid-liquid phase separation (LLPS), initiating nucleation which greatly enhances further addition of soluble PYCARD/ASC molecules to the speck in a prion-like polymerization process. Clustered PYCARD/ASC nucleates the formation of CASP1 (or possibly CASP4) filaments through the interaction of their respective CARD domains, acting as a platform for CASP1 polymerization. CASP1 filament formation increases local enzyme concentration, resulting in trans-autocleavage and activation. Active CASP1 then processes IL1B and IL18 precursors, leading to the release of mature cytokines in the extracellular milieu and inflammatory response. Interacts with DHX15. In terms of processing, polyubiquitinated with 'Lys-63'-linked chains, promoting the interaction with PYCARD/ASC and formation of the NLRP6 inflammasome. Deubiquitination by CYLD decreases the interaction with PYCARD/ASC. As to expression, expressed in peripheral blood leukocytes, predominantly in granulocytes and, at lower levels, in CD4(+) and CD8(+) T-cells. Expressed in colonic myofibroblasts (at protein level).

Its subcellular location is the cytoplasm. It localises to the cytosol. The protein resides in the inflammasome. It is found in the cell membrane. The protein localises to the nucleus membrane. Functionally, acts as the sensor component of the NLRP6 inflammasome, which mediates inflammasome activation in response to various pathogen-associated signals, leading to maturation and secretion of IL1B and IL18. Inflammasomes are supramolecular complexes that assemble in the cytosol in response to pathogens and other damage-associated signals and play critical roles in innate immunity and inflammation. Acts as a recognition receptor (PRR): recognizes and binds specific pathogens and other damage-associated signals, such as lipoteichoic acid (LTA), a cell-wall component of Gram-positive bacteria, or double stranded RNA (dsRNA). May also recognize and bind lipopolysaccharide (LPS), a major component of the outer membrane of Gram-negative bacteria; however, LPS is probably not a major activator of the NLRP6 inflammasome. Following LTA- or dsRNA-binding, NLRP6 undergoes liquid-liquid phase separation (LLPS), enhancing multivalent interactions, an essential step for the formation of the NLRP6 inflammasome polymeric complex. The NLRP6 inflammasome acts by promoting recruitment of effector pro-inflammatory caspases (CASP1 and/or CASP4) that catalyze maturation and secretion of IL1B and IL18 in the extracellular milieu. The NLRP6 inflammasome plays a central role in the maintenance of epithelial integrity and host defense against microbial infections in the intestine. Required to restrict infection against Gram-positive bacteria by recognizing lipoteichoic acid (LTA), leading to recruitment of CASP4 and CASP1, and subsequent maturation and secretion of IL1B and IL18. Involved in intestinal antiviral innate immunity together with DHX15: recognizes and binds viral dsRNA to restrict infection by enteric viruses through the interferon pathway and GSDMD-dependent release of IL18. Required to prevent infection by the apicomplexan parasite Cryptosporidium in enterocytes by promoting GSDMD-dependent release of IL18. The NLRP6 inflammasome may also regulate the gut microbiota composition by acting as a sensor of microbiota-associated metabolites to form a PYCARD/ASC-dependent inflammasome for downstream IL18 release and secretion of antimicrobial peptides. Essential for gut mucosal self-renewal and proliferation. Regulate mucus secretion in an inflammasome- and autophagy-dependent manner to prevent invasion by enteric bacteria,. During systemic bacterial infections, the NLRP6 inflammasome negatively regulates neutrophil recruitment and neutrophil extracellular traps (NETs) formation. May promote peripheral nerve recovery following injury via an inflammasome-independent mechanism. The polypeptide is NACHT, LRR and PYD domains-containing protein 6 (Homo sapiens (Human)).